Consider the following 384-residue polypeptide: Glutamate 5-kinase (384 aa).

An ATP-binding site is contributed by Lys-24. Residues Ser-64, Asp-149, and Asn-161 each coordinate substrate. Residues 181–182 (TD) and 223–229 (TGGMRTK) contribute to the ATP site. In terms of domain architecture, PUA spans 288–370 (PGAILIDAGA…RDIQTLLGYT (83 aa)).

The protein belongs to the glutamate 5-kinase family.

Its subcellular location is the cytoplasm. It carries out the reaction L-glutamate + ATP = L-glutamyl 5-phosphate + ADP. It functions in the pathway amino-acid biosynthesis; L-proline biosynthesis; L-glutamate 5-semialdehyde from L-glutamate: step 1/2. In terms of biological role, catalyzes the transfer of a phosphate group to glutamate to form L-glutamate 5-phosphate. The sequence is that of Glutamate 5-kinase from Xylella fastidiosa (strain M23).